The chain runs to 362 residues: Peptide chain release factor 1 (362 aa).

An N5-methylglutamine modification is found at glutamine 238.

The protein belongs to the prokaryotic/mitochondrial release factor family. Post-translationally, methylated by PrmC. Methylation increases the termination efficiency of RF1.

The protein resides in the cytoplasm. In terms of biological role, peptide chain release factor 1 directs the termination of translation in response to the peptide chain termination codons UAG and UAA. The sequence is that of Peptide chain release factor 1 from Psychrobacter cryohalolentis (strain ATCC BAA-1226 / DSM 17306 / VKM B-2378 / K5).